We begin with the raw amino-acid sequence, 311 residues long: Aspartate carbamoyltransferase catalytic subunit (311 aa).

Arg-55 and Thr-56 together coordinate carbamoyl phosphate. Lys-85 serves as a coordination point for L-aspartate. Carbamoyl phosphate contacts are provided by Arg-106, His-135, and Gln-138. L-aspartate contacts are provided by Arg-168 and Arg-230. Carbamoyl phosphate contacts are provided by Leu-268 and Pro-269.

It belongs to the aspartate/ornithine carbamoyltransferase superfamily. ATCase family. Heterododecamer (2C3:3R2) of six catalytic PyrB chains organized as two trimers (C3), and six regulatory PyrI chains organized as three dimers (R2).

It catalyses the reaction carbamoyl phosphate + L-aspartate = N-carbamoyl-L-aspartate + phosphate + H(+). It participates in pyrimidine metabolism; UMP biosynthesis via de novo pathway; (S)-dihydroorotate from bicarbonate: step 2/3. Catalyzes the condensation of carbamoyl phosphate and aspartate to form carbamoyl aspartate and inorganic phosphate, the committed step in the de novo pyrimidine nucleotide biosynthesis pathway. In Escherichia coli (strain 55989 / EAEC), this protein is Aspartate carbamoyltransferase catalytic subunit.